Reading from the N-terminus, the 139-residue chain is ATP synthase epsilon chain (139 aa).

The protein belongs to the ATPase epsilon chain family. In terms of assembly, F-type ATPases have 2 components, CF(1) - the catalytic core - and CF(0) - the membrane proton channel. CF(1) has five subunits: alpha(3), beta(3), gamma(1), delta(1), epsilon(1). CF(0) has three main subunits: a, b and c.

It is found in the cell inner membrane. In terms of biological role, produces ATP from ADP in the presence of a proton gradient across the membrane. In Escherichia coli O139:H28 (strain E24377A / ETEC), this protein is ATP synthase epsilon chain.